Here is a 151-residue protein sequence, read N- to C-terminus: Large ribosomal subunit protein bL9 (151 aa).

The protein belongs to the bacterial ribosomal protein bL9 family.

Binds to the 23S rRNA. This is Large ribosomal subunit protein bL9 from Pseudothermotoga lettingae (strain ATCC BAA-301 / DSM 14385 / NBRC 107922 / TMO) (Thermotoga lettingae).